The chain runs to 35 residues: DLVQFGQMILKVAGRSLPKSYGAYGCYCGWGGRGK.

Residues Tyr-27, Gly-29, and Gly-31 each contribute to the Ca(2+) site.

This sequence belongs to the phospholipase A2 family. Group II subfamily. D49 sub-subfamily. As to quaternary structure, dimer. Ca(2+) serves as cofactor. As to expression, expressed by the venom gland.

The protein localises to the secreted. It catalyses the reaction a 1,2-diacyl-sn-glycero-3-phosphocholine + H2O = a 1-acyl-sn-glycero-3-phosphocholine + a fatty acid + H(+). In terms of biological role, snake venom phospholipase A2 (PLA2) that shows presynaptic neurotoxicity. 10 ug/ml of this protein produce complete neuromuscular blockade up to 80 minutes, without inhibiting the responses to acetylcholine (ACh) and potassium chloride (KCl). In addition, it produces a calcium-dependent blockade of acetylcholine release and causes appearance of giant miniature end-plate potentials. PLA2 catalyzes the calcium-dependent hydrolysis of the 2-acyl groups in 3-sn-phosphoglycerides. In Bothrops pauloensis (Neuwied's lancehead), this protein is Phospholipase A2 neuwieditoxin-1.